The chain runs to 147 residues: Ras-related protein RabK2 (147 aa).

Residues 11–15 and 63–66 each bind GTP; these read NTHGS and TKSD. Cysteine 145 is lipidated: S-geranylgeranyl cysteine.

The protein belongs to the small GTPase superfamily. Rab family.

The protein localises to the cell membrane. This Dictyostelium discoideum (Social amoeba) protein is Ras-related protein RabK2 (rabK2).